A 253-amino-acid chain; its full sequence is Isoprenyl transferase (253 aa).

D30 is a catalytic residue. D30 serves as a coordination point for Mg(2+). Residues 31-34, W35, H51, and 79-81 each bind substrate; these read GNRR and STE. N82 acts as the Proton acceptor in catalysis. Substrate-binding positions include F83, R85, R202, and 208-210; that span reads RVS. E221 contributes to the Mg(2+) binding site.

Belongs to the UPP synthase family. In terms of assembly, homodimer. It depends on Mg(2+) as a cofactor.

Its function is as follows. Catalyzes the condensation of isopentenyl diphosphate (IPP) with allylic pyrophosphates generating different type of terpenoids. The chain is Isoprenyl transferase from Chlamydia trachomatis serovar D (strain ATCC VR-885 / DSM 19411 / UW-3/Cx).